Consider the following 213-residue polypeptide: Cytochrome c biogenesis ATP-binding export protein CcmA (213 aa).

In terms of domain architecture, ABC transporter spans 8-213; sequence LQATALTCER…RDIDLGQWAA (206 aa). 40–47 provides a ligand contact to ATP; that stretch reads GPNGSGKT.

This sequence belongs to the ABC transporter superfamily. CcmA exporter (TC 3.A.1.107) family. As to quaternary structure, the complex is composed of two ATP-binding proteins (CcmA) and two transmembrane proteins (CcmB).

Its subcellular location is the cell inner membrane. It catalyses the reaction heme b(in) + ATP + H2O = heme b(out) + ADP + phosphate + H(+). Part of the ABC transporter complex CcmAB involved in the biogenesis of c-type cytochromes; once thought to export heme, this seems not to be the case, but its exact role is uncertain. Responsible for energy coupling to the transport system. The sequence is that of Cytochrome c biogenesis ATP-binding export protein CcmA from Pseudomonas savastanoi pv. phaseolicola (strain 1448A / Race 6) (Pseudomonas syringae pv. phaseolicola (strain 1448A / Race 6)).